The primary structure comprises 302 residues: Vomeronasal type-1 receptor 48 (302 aa).

Residues 1 to 16 (MNENSRLHTHSNIRNT) lie on the Extracellular side of the membrane. A helical membrane pass occupies residues 17–37 (FFSEIGIGISGNSFLLLFHII). Residues 38 to 49 (KFFRGHRPRLTD) lie on the Cytoplasmic side of the membrane. Residues 50–70 (LPIGLLSLIHLLMLLVAAVIA) traverse the membrane as a helical segment. Residues 71-91 (TDIFISWRGWNDIICKFLVYL) are Extracellular-facing. The cysteines at positions 85 and 172 are disulfide-linked. Residues 92-114 (YRSLRGLSLCTTSMLSVLQAIIL) traverse the membrane as a helical segment. Over 115–131 (SPRSYCLAKFKRKSSHN) the chain is Cytoplasmic. The helical transmembrane segment at 132-152 (ISCAIIFLSVLYMSISSHLLI) threads the bilayer. Topologically, residues 153–193 (SITATPNLTMNDFLYVSQSCSLLPLSYLMQSIYSTLLVLRE) are extracellular. N159 is a glycosylation site (N-linked (GlcNAc...) asparagine). A helical transmembrane segment spans residues 194-214 (VFLIGLMVLSTSYMVALLYMH). Over 215 to 238 (RKQAQNLQGTSLSLKASAEQRATQ) the chain is Cytoplasmic. Residues 239–259 (TILMLMTFFVLMSIFDSIVSC) traverse the membrane as a helical segment. Residues 260 to 269 (SRTMFLDDPT) are Extracellular-facing. Residues 270-290 (SYSIHIFVMHIYATVSPFVFI) traverse the membrane as a helical segment. The Cytoplasmic segment spans residues 291 to 302 (STEKHIVNILRG).

Belongs to the G-protein coupled receptor 1 family.

Its subcellular location is the cell membrane. Putative pheromone receptor implicated in the regulation of social and reproductive behavior. This Mus musculus (Mouse) protein is Vomeronasal type-1 receptor 48 (Vmn1r48).